We begin with the raw amino-acid sequence, 29 residues long: Kappa-sparatoxin-Hv1e (29 aa).

Intrachain disulfides connect Cys3-Cys17, Cys10-Cys22, and Cys16-Cys26.

In terms of tissue distribution, expressed by the venom gland.

It localises to the secreted. In terms of biological role, inhibitor of voltage-gated potassium channels of the Kv4/KCND family. Blocks calcium channels (Cav). The protein is Kappa-sparatoxin-Hv1e of Heteropoda venatoria (Brown huntsman spider).